A 408-amino-acid chain; its full sequence is Peptidase T (408 aa).

A Zn(2+)-binding site is contributed by His78. Residue Asp80 is part of the active site. Zn(2+) is bound at residue Asp141. The active-site Proton acceptor is Glu175. 3 residues coordinate Zn(2+): Glu176, Asp198, and His380.

Belongs to the peptidase M20B family. Requires Zn(2+) as cofactor.

It is found in the cytoplasm. The enzyme catalyses Release of the N-terminal residue from a tripeptide.. Functionally, cleaves the N-terminal amino acid of tripeptides. The sequence is that of Peptidase T from Clostridium botulinum (strain Okra / Type B1).